We begin with the raw amino-acid sequence, 86 residues long: MSEVASRELRNDTAGVLRRVRAGEDVTITVSGRPVAVLTPVRPRRRRWLSKTEFLSRLRGAQADPGLRNDLAVLAGDTTEDLGPIR.

It belongs to the phD/YefM antitoxin family. Forms a complex with VapC5.

Its function is as follows. Probable antitoxin component of a probable type II toxin-antitoxin (TA) system. The cognate toxin is VapC5. In Mycobacterium tuberculosis (strain CDC 1551 / Oshkosh), this protein is Putative antitoxin VapB5 (vapB5).